A 401-amino-acid chain; its full sequence is Dual-specificity RNA methyltransferase RlmN (401 aa).

Residue glutamate 114 is the Proton acceptor of the active site. One can recognise a Radical SAM core domain in the interval 120 to 365; it reads DKGRGTLCVS…TMVRRTRGDD (246 aa). The cysteines at positions 127 and 370 are disulfide-linked. Cysteine 134, cysteine 138, and cysteine 141 together coordinate [4Fe-4S] cluster. S-adenosyl-L-methionine-binding positions include 187 to 188, serine 219, 241 to 243, and asparagine 327; these read GE and SLH. Cysteine 370 acts as the S-methylcysteine intermediate in catalysis.

The protein belongs to the radical SAM superfamily. RlmN family. The cofactor is [4Fe-4S] cluster.

The protein resides in the cytoplasm. It carries out the reaction adenosine(2503) in 23S rRNA + 2 reduced [2Fe-2S]-[ferredoxin] + 2 S-adenosyl-L-methionine = 2-methyladenosine(2503) in 23S rRNA + 5'-deoxyadenosine + L-methionine + 2 oxidized [2Fe-2S]-[ferredoxin] + S-adenosyl-L-homocysteine. The enzyme catalyses adenosine(37) in tRNA + 2 reduced [2Fe-2S]-[ferredoxin] + 2 S-adenosyl-L-methionine = 2-methyladenosine(37) in tRNA + 5'-deoxyadenosine + L-methionine + 2 oxidized [2Fe-2S]-[ferredoxin] + S-adenosyl-L-homocysteine. In terms of biological role, specifically methylates position 2 of adenine 2503 in 23S rRNA and position 2 of adenine 37 in tRNAs. m2A2503 modification seems to play a crucial role in the proofreading step occurring at the peptidyl transferase center and thus would serve to optimize ribosomal fidelity. The polypeptide is Dual-specificity RNA methyltransferase RlmN (Xanthomonas axonopodis pv. citri (strain 306)).